The sequence spans 297 residues: HTH-type transcriptional regulator ArgP (297 aa).

The HTH lysR-type domain occupies 4–60; sequence PDYRTLQALDAVIRERGFERAAQKLCITQSAVSQRIKQLENTFGQPLLVRTVPPRPT. Residues 21-40 constitute a DNA-binding region (H-T-H motif); sequence FERAAQKLCITQSAVSQRIK.

Belongs to the LysR transcriptional regulatory family. In terms of assembly, homodimer.

Functionally, controls the transcription of genes involved in arginine and lysine metabolism. This chain is HTH-type transcriptional regulator ArgP, found in Cronobacter sakazakii (strain ATCC BAA-894) (Enterobacter sakazakii).